A 471-amino-acid chain; its full sequence is MTDLPQNVRWQLWIVAFGFFMQALDTTIVNTALPSMAASLGESPLRMHMVIVSYVLTVAVMLPASGWLADRVGVRNIFFTAIVLFTLGSLFCAQSSTLNELVAARVLQGIGGAMMVPVGRLTVMKIVPRDQYMAAMTFVTLPGQVGPLLGPALGGLLVEYASWHWIFLINLPVGIAGAAATLWLMPNYTMQTRRFDFSGFLLLAFGMAALTIALDGYRSTGLSPAGLGALVAGGSAATLLYLWHARGNERALFSLRLFNTRTFSLGLFGSLCGRIGSGMLPFMTPVFLQIGLGFSPFHAGLMMMPMVLGSMGIKRIVVQVVNRFGYRRVLVASTLALALVTLLFMGVALAGWYWLLPVVMLFQGMVNSVRFSTMNTLTLRDLPDEMASSGNSLLSMVMQLSMSLGVSIAGLLLGAFGHNQLAADSGDAHGIFFWTYLCMALIIALPALVFARVPDDISKNAVIARRKRSAS.

Helical transmembrane passes span 12–32, 49–69, 77–97, 106–126, 138–158, 165–185, 197–217, 225–245, 263–285, 290–312, 342–362, 396–416, and 431–451; these read LWIVAFGFFMQALDTTIVNTA, MVIVSYVLTVAVMLPASGWLA, IFFTAIVLFTLGSLFCAQSST, VLQGIGGAMMVPVGRLTVMKI, FVTLPGQVGPLLGPALGGLLV, WIFLINLPVGIAGAAATLWLM, FSGFLLLAFGMAALTIALDGY, AGLGALVAGGSAATLLYLWHA, FSLGLFGSLCGRIGSGMLPFMTP, IGLGFSPFHAGLMMMPMVLGSMG, LLFMGVALAGWYWLLPVVMLF, MVMQLSMSLGVSIAGLLLGAF, and IFFWTYLCMALIIALPALVFA.

This sequence belongs to the major facilitator superfamily. TCR/Tet family.

The protein localises to the cell inner membrane. The chain is Putative multidrug resistance protein MdtD from Cronobacter sakazakii (strain ATCC BAA-894) (Enterobacter sakazakii).